Reading from the N-terminus, the 405-residue chain is Adenosylhomocysteinase (405 aa).

Substrate-binding residues include D113 and E138. 139–141 (TTT) is a binding site for NAD(+). 2 residues coordinate substrate: K168 and D172. NAD(+) is bound by residues N173, 202–207 (GYGWCG), E225, N260, 281–283 (AGH), and N327.

This sequence belongs to the adenosylhomocysteinase family. The cofactor is NAD(+).

It is found in the cytoplasm. It catalyses the reaction S-adenosyl-L-homocysteine + H2O = L-homocysteine + adenosine. It functions in the pathway amino-acid biosynthesis; L-homocysteine biosynthesis; L-homocysteine from S-adenosyl-L-homocysteine: step 1/1. May play a key role in the regulation of the intracellular concentration of adenosylhomocysteine. The chain is Adenosylhomocysteinase from Archaeoglobus fulgidus (strain ATCC 49558 / DSM 4304 / JCM 9628 / NBRC 100126 / VC-16).